We begin with the raw amino-acid sequence, 635 residues long: Extracellular metalloproteinase 1 (635 aa).

The N-terminal stretch at 1-19 (MHGLLLAAGLLSLPLHVLA) is a signal peptide. Positions 20–246 (HPQPSTSTSL…VHNVVDYVAH (227 aa)) are excised as a propeptide. Asn-287 carries N-linked (GlcNAc...) asparagine glycosylation. Position 430 (His-430) interacts with Zn(2+). Glu-431 is a catalytic residue. His-434 is a binding site for Zn(2+). Asn-475, Asn-594, and Asn-623 each carry an N-linked (GlcNAc...) asparagine glycan.

Belongs to the peptidase M36 family. Zn(2+) is required as a cofactor.

The protein localises to the secreted. Its function is as follows. Secreted metalloproteinase probably acting as a virulence factor. This Trichophyton tonsurans (Scalp ringworm fungus) protein is Extracellular metalloproteinase 1 (MEP1).